The sequence spans 75 residues: Alpha-amylase inhibitor Paim-2 (75 aa).

2 cysteine pairs are disulfide-bonded: C10-C26 and C44-C72.

Functionally, inhibits mammalian alpha-amylases specifically but has no action on plant and microbial alpha-amylases. The sequence is that of Alpha-amylase inhibitor Paim-2 from Streptomyces olivaceoviridis (Streptomyces corchorusii).